Consider the following 370-residue polypeptide: Histidinol-phosphate aminotransferase 2 (370 aa).

Lys-230 bears the N6-(pyridoxal phosphate)lysine mark.

This sequence belongs to the class-II pyridoxal-phosphate-dependent aminotransferase family. Histidinol-phosphate aminotransferase subfamily. In terms of assembly, homodimer. Pyridoxal 5'-phosphate is required as a cofactor.

It catalyses the reaction L-histidinol phosphate + 2-oxoglutarate = 3-(imidazol-4-yl)-2-oxopropyl phosphate + L-glutamate. It functions in the pathway amino-acid biosynthesis; L-histidine biosynthesis; L-histidine from 5-phospho-alpha-D-ribose 1-diphosphate: step 7/9. This chain is Histidinol-phosphate aminotransferase 2, found in Pseudomonas fluorescens (strain Pf0-1).